The following is a 72-amino-acid chain: Translation initiation factor IF-1 (72 aa).

The S1-like domain occupies 1 to 72 (MSKEDAIEVM…TRGRIVYRYK (72 aa)).

It belongs to the IF-1 family. As to quaternary structure, component of the 30S ribosomal translation pre-initiation complex which assembles on the 30S ribosome in the order IF-2 and IF-3, IF-1 and N-formylmethionyl-tRNA(fMet); mRNA recruitment can occur at any time during PIC assembly.

It localises to the cytoplasm. Functionally, one of the essential components for the initiation of protein synthesis. Stabilizes the binding of IF-2 and IF-3 on the 30S subunit to which N-formylmethionyl-tRNA(fMet) subsequently binds. Helps modulate mRNA selection, yielding the 30S pre-initiation complex (PIC). Upon addition of the 50S ribosomal subunit IF-1, IF-2 and IF-3 are released leaving the mature 70S translation initiation complex. In Koribacter versatilis (strain Ellin345), this protein is Translation initiation factor IF-1.